Reading from the N-terminus, the 660-residue chain is tRNA 5-methylaminomethyl-2-thiouridine biosynthesis bifunctional protein MnmC (660 aa).

The interval 1-242 (MTDRIVPATL…KRAMLVGEFA (242 aa)) is tRNA (mnm(5)s(2)U34)-methyltransferase. The tract at residues 266-660 (IGAGLAGCAV…VRALRHGRVA (395 aa)) is FAD-dependent cmnm(5)s(2)U34 oxidoreductase.

In the N-terminal section; belongs to the methyltransferase superfamily. tRNA (mnm(5)s(2)U34)-methyltransferase family. This sequence in the C-terminal section; belongs to the DAO family. It depends on FAD as a cofactor.

The protein localises to the cytoplasm. It catalyses the reaction 5-aminomethyl-2-thiouridine(34) in tRNA + S-adenosyl-L-methionine = 5-methylaminomethyl-2-thiouridine(34) in tRNA + S-adenosyl-L-homocysteine + H(+). Functionally, catalyzes the last two steps in the biosynthesis of 5-methylaminomethyl-2-thiouridine (mnm(5)s(2)U) at the wobble position (U34) in tRNA. Catalyzes the FAD-dependent demodification of cmnm(5)s(2)U34 to nm(5)s(2)U34, followed by the transfer of a methyl group from S-adenosyl-L-methionine to nm(5)s(2)U34, to form mnm(5)s(2)U34. In Burkholderia mallei (strain NCTC 10247), this protein is tRNA 5-methylaminomethyl-2-thiouridine biosynthesis bifunctional protein MnmC.